The following is a 268-amino-acid chain: Interleukin-1 beta (268 aa).

The propeptide occupies 1–116; sequence MAEVPELASE…TRNNDACVHD (116 aa).

This sequence belongs to the IL-1 family. In terms of assembly, monomer. In its precursor form, weakly interacts with full-length MEFV; the mature cytokine does not interact at all. Interacts with integrins ITGAV:ITGBV and ITGA5:ITGB1; integrin-binding is required for IL1B signaling. Interacts with cargo receptor TMED10; the interaction is direct and is required for the secretion of IL1B mature form. Interacts with HSP90AB1; the interaction facilitates cargo translocation into the ERGIC. Interacts with HSP90B1; the interaction facilitates cargo translocation into the ERGIC.

Its subcellular location is the cytoplasm. It localises to the cytosol. The protein resides in the secreted. The protein localises to the lysosome. It is found in the extracellular exosome. Its function is as follows. Potent pro-inflammatory cytokine. Initially discovered as the major endogenous pyrogen, induces prostaglandin synthesis, neutrophil influx and activation, T-cell activation and cytokine production, B-cell activation and antibody production, and fibroblast proliferation and collagen production. Promotes Th17 differentiation of T-cells. Synergizes with IL12/interleukin-12 to induce IFNG synthesis from T-helper 1 (Th1) cells. Plays a role in angiogenesis by inducing VEGF production synergistically with TNF and IL6. Involved in transduction of inflammation downstream of pyroptosis: its mature form is specifically released in the extracellular milieu by passing through the gasdermin-D (GSDMD) pore. The protein is Interleukin-1 beta (IL1B) of Macaca fascicularis (Crab-eating macaque).